We begin with the raw amino-acid sequence, 340 residues long: Ferredoxin--NADP reductase (340 aa).

Residues D33, Q41, Y46, A86, F120, D286, and T327 each contribute to the FAD site.

It belongs to the ferredoxin--NADP reductase type 2 family. As to quaternary structure, homodimer. The cofactor is FAD.

The catalysed reaction is 2 reduced [2Fe-2S]-[ferredoxin] + NADP(+) + H(+) = 2 oxidized [2Fe-2S]-[ferredoxin] + NADPH. The protein is Ferredoxin--NADP reductase of Rickettsia rickettsii (strain Sheila Smith).